The sequence spans 463 residues: Lipase 5 (463 aa).

An N-terminal signal peptide occupies residues 1-14 (MLYLILFLIAPIYA). Cys110 and Cys281 are joined by a disulfide. The active-site Charge relay system is Ser194. Asn229 carries N-linked (GlcNAc...) asparagine glycosylation. Active-site charge relay system residues include Asp343 and His376. Cys359 and Cys404 are oxidised to a cystine.

It belongs to the AB hydrolase superfamily. Lipase family. Class Lip subfamily.

It localises to the secreted. It catalyses the reaction a triacylglycerol + H2O = a diacylglycerol + a fatty acid + H(+). Its activity is regulated as follows. Fe(2)+, Fe(3+), Hg(2+) as well as ethylenediaminetetraacetic acid (EDTA) and phenylmethanesulfonyl fluoride (PMSF) strongly inhibit the lipase activity. Surfactants such as Tween 20, Tween 80 and TritonX-100 show also inhibitory effect in the lipase activity. Sodium dodecyl sulfate (SDS) sharply decreases the lipase activity by 85%. Methanol, ethanol, and acetone have also negative effect on the lipase activity, with residual activities at 48%, 24% and 44% respectively. Finally, lipase activity is almost lost in the presence of isopropanol alcohol. Functionally, secreted lipase that is able to hydrolyze both the neutral triacylglycerols and the monopalmitate ester Tween 40, allowing the use of hydrolyzed products as carbon sources. Exhibits a preference for the short and medium chain length p-NP (C4 and C8 acyl group) esters rather than the long chain length p-NP esters (C12, C16 and C18 acyl group). Has broad lipolytic activity, which may be important for colonization and subsequent infection, therefore contributing to the persistence and virulence in human tissue. The sequence is that of Lipase 5 from Candida albicans (strain SC5314 / ATCC MYA-2876) (Yeast).